Consider the following 339-residue polypeptide: MSTVHEILCKLSLEGDHSTPPSAYGSVKAYTNFDAERDALNIETAIKTKGVDEVTIVNILTNRSNEQRQDIAFAYQRRTKKELASALKSALSGHLETVILGLLKTPAQYDASELKASMKGLGTDEDSLIEIICSRTNQELQEINRVYKEMYKTDLEKDIISDTSGDFRKLMVALAKGRRAEDGSVIDYELIDQDARDLYDAGVKRKGTDVPKWISIMTERSVCHLQKVFERYKSYSPYDMLESIKKEVKGDLENAFLNLVQCIQNKPLYFADRLYDSMKGKGTRDKVLIRIMVSRSEVDMLKIRSEFKRKYGKSLYYYIQQDTKGDYQKALLYLCGGDD.

Ser2 is modified (N-acetylserine). The interval Ser2–Tyr24 is S100A10-binding site. Position 24 is a phosphotyrosine; by SRC (Tyr24). At Ser26 the chain carries Phosphoserine; by PKC. Annexin repeat units lie at residues Phe33–Lys104 and Thr105–Lys176. Position 49 is an N6-acetyllysine; alternate (Lys49). Residue Lys49 forms a Glycyl lysine isopeptide (Lys-Gly) (interchain with G-Cter in SUMO1); alternate linkage. A Glycyl lysine isopeptide (Lys-Gly) (interchain with G-Cter in SUMO2); alternate cross-link involves residue Lys49. At Lys152 the chain carries N6-acetyllysine. Ser184 is modified (phosphoserine). 2 Annexin repeats span residues Glu189–Gln261 and Asn265–Gly336. Tyr199 is subject to Phosphotyrosine. Lys227 carries the N6-acetyllysine modification.

Belongs to the annexin family. As to quaternary structure, heterotetramer containing 2 light chains of S100A10/p11 and 2 heavy chains of ANXA2/p36. Interacts with ATP1B1. Interacts with DYSF. Interacts with COCH. Interacts (via repeat Annexin 1) with PCSK9 (via the C-terminal domain); the interaction inhibits the degradation of LDLR. Interacts with CEACAM1 (via the cytoplasmic domain); this interaction is regulated by phosphorylation of CEACAM1. Interacts with APPL2 and APPL1; targets APPL2 to endosomes and acting in parallel to RAB5A. Interacts with S100A4. May interact with UBAP2. Interacts with PLEKHG4B; this interaction is required for PLEKHG4B localization to cell-cell adhesions. Post-translationally, ISGylated.

Its subcellular location is the secreted. The protein localises to the extracellular space. The protein resides in the extracellular matrix. It localises to the basement membrane. Its function is as follows. Calcium-regulated membrane-binding protein whose affinity for calcium is greatly enhanced by anionic phospholipids. It binds two calcium ions with high affinity. May be involved in heat-stress response. Inhibits PCSK9-enhanced LDLR degradation, probably reduces PCSK9 protein levels via a translational mechanism but also competes with LDLR for binding with PCSK9. Binds to endosomes damaged by phagocytosis of particulate wear debris and participates in endosomal membrane stabilization, thereby limiting NLRP3 inflammasome activation. Required for endothelial cell surface plasmin generation and may support fibrinolytic surveillance and neoangiogenesis. The protein is Annexin A2 (ANXA2) of Canis lupus familiaris (Dog).